The primary structure comprises 334 residues: Serine/Arginine-related protein 53 (334 aa).

The segment covering 1 to 13 (MGRRSSDTEEESR) has biased composition (basic and acidic residues). 3 disordered regions span residues 1 to 179 (MGRR…HLPP), 198 to 220 (DEAL…EDQA), and 246 to 290 (RSSK…SIPT). Basic residues predominate over residues 14 to 24 (SKRKKKHRRRS). The span at 44-62 (PRSDSRSWSRDRQLRSHSY) shows a compositional bias: basic and acidic residues. A compositionally biased stretch (basic residues) spans 78 to 118 (SRRKRSRSRSRGRGKPYRVQRSRSKSRTRRSRSRPRPRSHS). Basic and acidic residues-rich tracts occupy residues 132 to 166 (RSRD…KRGD), 198 to 218 (DEAL…KEED), and 247 to 256 (SSKDVKKAVE). Positions 180–236 (AEQAKARLQLVLEAAAKADEALKAKERSEEEAKRRKEEDQATLVEQVKRVKEIEAIE) form a coiled coil. Residues 265–278 (AASGPASAAAEPPS) are compositionally biased toward low complexity.

In terms of assembly, interacts (via Arg/Ser-rich domain) with LUC7L3, RBM39 and RSF1. Post-translationally, phosphorylated.

The protein resides in the nucleus. Its subcellular location is the nucleus speckle. It is found in the cytoplasm. Functionally, plays a role in pre-mRNA splicing. Involved in both constitutive and alternative pre-mRNA splicing. May have a role in the recognition of the 3' splice site during the second step of splicing. This is Serine/Arginine-related protein 53 (Rsrc1) from Mus musculus (Mouse).